We begin with the raw amino-acid sequence, 199 residues long: MESTSSPELLQMARWLAGDFSNQEQAWENPPFFASIRVAYRPLPTAVLGGIGFYVEQAYSGHLEEPYRQAVVELTQVGDGIVIRNYRPLQPQRWRGCARGRAEQLSQLSAADLAYLPGCDVQVKRQGSLFVGVTEPGCRCCVVRNGQTTYLQTTLHLSENEFCSHDRGMDPVTHRQVWGAVAGPFRFRKVVDWQAELLQ.

It belongs to the CpcT/CpeT biliprotein lyase family.

In terms of biological role, covalently attaches a chromophore to Cys residue(s) of phycobiliproteins. This Synechococcus sp. (strain JA-3-3Ab) (Cyanobacteria bacterium Yellowstone A-Prime) protein is Chromophore lyase CpcT/CpeT 2.